The sequence spans 325 residues: Biotin synthase (325 aa).

The region spanning 49 to 279 is the Radical SAM core domain; it reads VGDKVELCSI…DKNIRYAGGR (231 aa). [4Fe-4S] cluster is bound by residues Cys-66, Cys-70, and Cys-73. [2Fe-2S] cluster is bound by residues Cys-144, Cys-204, and Arg-274.

This sequence belongs to the radical SAM superfamily. Biotin synthase family. As to quaternary structure, homodimer. The cofactor is [4Fe-4S] cluster. Requires [2Fe-2S] cluster as cofactor.

It catalyses the reaction (4R,5S)-dethiobiotin + (sulfur carrier)-SH + 2 reduced [2Fe-2S]-[ferredoxin] + 2 S-adenosyl-L-methionine = (sulfur carrier)-H + biotin + 2 5'-deoxyadenosine + 2 L-methionine + 2 oxidized [2Fe-2S]-[ferredoxin]. The protein operates within cofactor biosynthesis; biotin biosynthesis; biotin from 7,8-diaminononanoate: step 2/2. Its function is as follows. Catalyzes the conversion of dethiobiotin (DTB) to biotin by the insertion of a sulfur atom into dethiobiotin via a radical-based mechanism. The chain is Biotin synthase from Carboxydothermus hydrogenoformans (strain ATCC BAA-161 / DSM 6008 / Z-2901).